Here is a 352-residue protein sequence, read N- to C-terminus: Ion-translocating oxidoreductase complex subunit D (352 aa).

Transmembrane regions (helical) follow at residues 20-40 (IMLL…WFFG), 42-62 (GTLF…AIVL), 69-91 (VASH…SIPP), and 123-143 (PAMI…TSWL). Thr-187 is modified (FMN phosphoryl threonine). The next 5 membrane-spanning stretches (helical) occupy residues 215–235 (LAGV…VFLL), 242–262 (WHIP…GWLF), 267–287 (LASP…FFIL), 301–321 (LIFG…GGYP), and 322–342 (DGVA…DYYT).

It belongs to the NqrB/RnfD family. The complex is composed of six subunits: RsxA, RsxB, RsxC, RsxD, RsxE and RsxG. Requires FMN as cofactor.

The protein resides in the cell inner membrane. Its function is as follows. Part of a membrane-bound complex that couples electron transfer with translocation of ions across the membrane. Required to maintain the reduced state of SoxR. This Salmonella enteritidis PT4 (strain P125109) protein is Ion-translocating oxidoreductase complex subunit D.